Here is a 446-residue protein sequence, read N- to C-terminus: Na(+)-translocating NADH-quinone reductase subunit A (446 aa).

It belongs to the NqrA family. In terms of assembly, composed of six subunits; NqrA, NqrB, NqrC, NqrD, NqrE and NqrF.

It carries out the reaction a ubiquinone + n Na(+)(in) + NADH + H(+) = a ubiquinol + n Na(+)(out) + NAD(+). In terms of biological role, NQR complex catalyzes the reduction of ubiquinone-1 to ubiquinol by two successive reactions, coupled with the transport of Na(+) ions from the cytoplasm to the periplasm. NqrA to NqrE are probably involved in the second step, the conversion of ubisemiquinone to ubiquinol. This chain is Na(+)-translocating NADH-quinone reductase subunit A, found in Histophilus somni (strain 129Pt) (Haemophilus somnus).